The chain runs to 296 residues: Nucleotide-binding protein Pnuc_1915 (296 aa).

8–15 (GISGSGKS) serves as a coordination point for ATP. 57 to 60 (DARR) is a GTP binding site.

Belongs to the RapZ-like family.

Functionally, displays ATPase and GTPase activities. This Polynucleobacter asymbioticus (strain DSM 18221 / CIP 109841 / QLW-P1DMWA-1) (Polynucleobacter necessarius subsp. asymbioticus) protein is Nucleotide-binding protein Pnuc_1915.